A 336-amino-acid polypeptide reads, in one-letter code: Holliday junction branch migration complex subunit RuvB (336 aa).

The large ATPase domain (RuvB-L) stretch occupies residues 1-182 (MKERIVNLET…FGMSFRMQFY (182 aa)). ATP-binding positions include L21, R22, G63, K66, T67, S68, 129-131 (EDF), R172, Y182, and R219. T67 lines the Mg(2+) pocket. The segment at 183–253 (SPSELALIIK…ITLHALNELG (71 aa)) is small ATPAse domain (RuvB-S). Residues 256-336 (ELGFDEADLA…IPTLKSQTLF (81 aa)) are head domain (RuvB-H). R310 and R315 together coordinate DNA.

The protein belongs to the RuvB family. In terms of assembly, homohexamer. Forms an RuvA(8)-RuvB(12)-Holliday junction (HJ) complex. HJ DNA is sandwiched between 2 RuvA tetramers; dsDNA enters through RuvA and exits via RuvB. An RuvB hexamer assembles on each DNA strand where it exits the tetramer. Each RuvB hexamer is contacted by two RuvA subunits (via domain III) on 2 adjacent RuvB subunits; this complex drives branch migration. In the full resolvosome a probable DNA-RuvA(4)-RuvB(12)-RuvC(2) complex forms which resolves the HJ.

It is found in the cytoplasm. It catalyses the reaction ATP + H2O = ADP + phosphate + H(+). The RuvA-RuvB-RuvC complex processes Holliday junction (HJ) DNA during genetic recombination and DNA repair, while the RuvA-RuvB complex plays an important role in the rescue of blocked DNA replication forks via replication fork reversal (RFR). RuvA specifically binds to HJ cruciform DNA, conferring on it an open structure. The RuvB hexamer acts as an ATP-dependent pump, pulling dsDNA into and through the RuvAB complex. RuvB forms 2 homohexamers on either side of HJ DNA bound by 1 or 2 RuvA tetramers; 4 subunits per hexamer contact DNA at a time. Coordinated motions by a converter formed by DNA-disengaged RuvB subunits stimulates ATP hydrolysis and nucleotide exchange. Immobilization of the converter enables RuvB to convert the ATP-contained energy into a lever motion, pulling 2 nucleotides of DNA out of the RuvA tetramer per ATP hydrolyzed, thus driving DNA branch migration. The RuvB motors rotate together with the DNA substrate, which together with the progressing nucleotide cycle form the mechanistic basis for DNA recombination by continuous HJ branch migration. Branch migration allows RuvC to scan DNA until it finds its consensus sequence, where it cleaves and resolves cruciform DNA. This is Holliday junction branch migration complex subunit RuvB from Helicobacter pylori (strain G27).